The chain runs to 140 residues: Ribosome-binding factor A (140 aa).

Basic residues predominate over residues 1–13; the sequence is MQKKSSSKSHRAT. The disordered stretch occupies residues 1 to 22; it reads MQKKSSSKSHRATRGPSQRQLR.

This sequence belongs to the RbfA family. In terms of assembly, monomer. Binds 30S ribosomal subunits, but not 50S ribosomal subunits or 70S ribosomes.

The protein localises to the cytoplasm. Functionally, one of several proteins that assist in the late maturation steps of the functional core of the 30S ribosomal subunit. Associates with free 30S ribosomal subunits (but not with 30S subunits that are part of 70S ribosomes or polysomes). Required for efficient processing of 16S rRNA. May interact with the 5'-terminal helix region of 16S rRNA. The protein is Ribosome-binding factor A of Parvibaculum lavamentivorans (strain DS-1 / DSM 13023 / NCIMB 13966).